The chain runs to 255 residues: Small ribosomal subunit protein uS10m (255 aa).

A mitochondrion-targeting transit peptide spans 1–32 (MALPAARSALSARAFIRPAAALNAAASSSRYL). Disordered regions lie at residues 30–52 (RYLSTTTPRHDAPVATTPGNSET) and 220–255 (SEGEGEDQAEGVQKIVDAAREEKPAEKLKEEEAKSS). Residues 236–255 (DAAREEKPAEKLKEEEAKSS) are compositionally biased toward basic and acidic residues.

This sequence belongs to the universal ribosomal protein uS10 family. As to quaternary structure, part of the mitochondrial small ribosomal subunit.

The protein resides in the mitochondrion. Functionally, involved in mitochondrial genome encoded proteins translation. Involved in the binding of tRNA to the ribosomes. This Cryptococcus neoformans var. neoformans serotype D (strain B-3501A) (Filobasidiella neoformans) protein is Small ribosomal subunit protein uS10m (RSM10).